The chain runs to 111 residues: UPF0060 membrane protein xcc-b100_1273 (111 aa).

4 consecutive transmembrane segments (helical) span residues 8–28 (LLLF…PYLW), 34–54 (SVWL…LLTL), 62–82 (VYAA…WWVD), and 91–111 (LLGA…PRSG).

The protein belongs to the UPF0060 family.

Its subcellular location is the cell inner membrane. The sequence is that of UPF0060 membrane protein xcc-b100_1273 from Xanthomonas campestris pv. campestris (strain B100).